The primary structure comprises 253 residues: Triosephosphate isomerase (253 aa).

A substrate-binding site is contributed by 9-11 (NWK). His96 serves as the catalytic Electrophile. The active-site Proton acceptor is Glu168. Residues Gly174, Ser213, and 234–235 (GG) each bind substrate.

It belongs to the triosephosphate isomerase family. Homodimer.

The protein localises to the cytoplasm. The enzyme catalyses D-glyceraldehyde 3-phosphate = dihydroxyacetone phosphate. It participates in carbohydrate biosynthesis; gluconeogenesis. It functions in the pathway carbohydrate degradation; glycolysis; D-glyceraldehyde 3-phosphate from glycerone phosphate: step 1/1. In terms of biological role, involved in the gluconeogenesis. Catalyzes stereospecifically the conversion of dihydroxyacetone phosphate (DHAP) to D-glyceraldehyde-3-phosphate (G3P). The chain is Triosephosphate isomerase from Hydrogenovibrio crunogenus (strain DSM 25203 / XCL-2) (Thiomicrospira crunogena).